The primary structure comprises 378 residues: Ferredoxin--NADP reductase, root isozyme, chloroplastic (378 aa).

Residues 1 to 17 (MATAVASQVAVSAPAGS) show a composition bias toward low complexity. Positions 1-27 (MATAVASQVAVSAPAGSDRGLRSSGIQ) are disordered. The N-terminal 62 residues, 1–62 (MATAVASQVA…PRHANKVLCM (62 aa)), are a transit peptide targeting the chloroplast. The FAD-binding FR-type domain occupies 93–221 (KEPYTATIVS…TGPSGKIMLL (129 aa)). FAD contacts are provided by residues 153–156 (RLYS), 174–176 (CVR), tyrosine 180, 195–197 (VCS), and threonine 237. NADP(+)-binding residues include serine 156 and arginine 176. Residues threonine 237, 269–270 (VA), 299–300 (SR), lysine 309, 337–338 (GL), and glutamate 376 each bind NADP(+).

The protein belongs to the ferredoxin--NADP reductase type 1 family. FAD is required as a cofactor.

Its subcellular location is the plastid. The protein resides in the chloroplast. The enzyme catalyses 2 reduced [2Fe-2S]-[ferredoxin] + NADP(+) + H(+) = 2 oxidized [2Fe-2S]-[ferredoxin] + NADPH. It functions in the pathway energy metabolism; photosynthesis. In terms of biological role, may play a key role in regulating the relative amounts of cyclic and non-cyclic electron flow to meet the demands of the plant for ATP and reducing power. Is involved in nitrate assimilation. This Oryza sativa subsp. japonica (Rice) protein is Ferredoxin--NADP reductase, root isozyme, chloroplastic.